The following is a 236-amino-acid chain: Eukaryotic translation initiation factor 3 subunit J (236 aa).

Residues 1-65 are disordered; that stretch reads MADDWESAAD…APAKPKPNKA (65 aa). Acidic residues predominate over residues 28-46; that stretch reads GEDEDEDIKDSWEDEEEKK. Residues 47–58 show a composition bias toward basic and acidic residues; sequence DEEKPTKTEAPA.

It belongs to the eIF-3 subunit J family. In terms of assembly, component of the eukaryotic translation initiation factor 3 (eIF-3) complex. The eIF-3 complex interacts with pix.

The protein localises to the cytoplasm. Component of the eukaryotic translation initiation factor 3 (eIF-3) complex, which is involved in protein synthesis of a specialized repertoire of mRNAs and, together with other initiation factors, stimulates binding of mRNA and methionyl-tRNAi to the 40S ribosome. The eIF-3 complex specifically targets and initiates translation of a subset of mRNAs involved in cell proliferation. The polypeptide is Eukaryotic translation initiation factor 3 subunit J (Drosophila melanogaster (Fruit fly)).